Here is a 332-residue protein sequence, read N- to C-terminus: uncharacterized protein (332 aa).

The helical transmembrane segment at 185-205 (MVYGYSVFNAFFILLALPNVI) threads the bilayer.

It localises to the host membrane. This is an uncharacterized protein from Sulfolobus islandicus filamentous virus (isolate Iceland/Hveragerdi) (SIFV).